The primary structure comprises 206 residues: Glutathione peroxidase 1 (206 aa).

Ser37 carries the phosphoserine modification. The active site involves Sec52. A non-standard amino acid (selenocysteine) is located at residue Sec52. An N6-acetyllysine; alternate mark is found at Lys91, Lys117, and Lys151. N6-succinyllysine; alternate is present on residues Lys91, Lys117, and Lys151. Ser200 and Ser204 each carry phosphoserine.

This sequence belongs to the glutathione peroxidase family. As to quaternary structure, homotetramer. Interacts with MIEN1. Post-translationally, during periods of oxidative stress, Sec-52 may react with a superoxide radical, irreversibly lose hydroselenide and be converted to dehydroalanine.

Its subcellular location is the cytoplasm. It localises to the mitochondrion. The enzyme catalyses 2 glutathione + H2O2 = glutathione disulfide + 2 H2O. It catalyses the reaction a hydroperoxy polyunsaturated fatty acid + 2 glutathione = a hydroxy polyunsaturated fatty acid + glutathione disulfide + H2O. The catalysed reaction is tert-butyl hydroperoxide + 2 glutathione = tert-butanol + glutathione disulfide + H2O. It carries out the reaction cumene hydroperoxide + 2 glutathione = 2-phenylpropan-2-ol + glutathione disulfide + H2O. The enzyme catalyses (13S)-hydroperoxy-(9Z,11E)-octadecadienoate + 2 glutathione = (13S)-hydroxy-(9Z,11E)-octadecadienoate + glutathione disulfide + H2O. It catalyses the reaction (9S)-hydroperoxy-(10E,12Z)-octadecadienoate + 2 glutathione = (9S)-hydroxy-(10E,12Z)-octadecadienoate + glutathione disulfide + H2O. The catalysed reaction is (5S)-hydroperoxy-(6E,8Z,11Z,14Z)-eicosatetraenoate + 2 glutathione = (5S)-hydroxy-(6E,8Z,11Z,14Z)-eicosatetraenoate + glutathione disulfide + H2O. It carries out the reaction (12S)-hydroperoxy-(5Z,8Z,10E,14Z)-eicosatetraenoate + 2 glutathione = (12S)-hydroxy-(5Z,8Z,10E,14Z)-eicosatetraenoate + glutathione disulfide + H2O. The enzyme catalyses (12R)-hydroperoxy-(5Z,8Z,10E,14Z)-eicosatetraenoate + 2 glutathione = (12R)-hydroxy-(5Z,8Z,10E,14Z)-eicosatetraenoate + glutathione disulfide + H2O. It catalyses the reaction (15S)-hydroperoxy-(5Z,8Z,11Z,13E)-eicosatetraenoate + 2 glutathione = (15S)-hydroxy-(5Z,8Z,11Z,13E)-eicosatetraenoate + glutathione disulfide + H2O. The catalysed reaction is (5S)-hydroperoxy-(6E,8Z,11Z,14Z,17Z)-eicosapentaenoate + 2 glutathione = (5S)-hydroxy-(6E,8Z,11Z,14Z,17Z)-eicosapentaenoate + glutathione disulfide + H2O. It carries out the reaction (12S)-hydroperoxy-(5Z,8Z,10E,14Z,17Z)-eicosapentaenoate + 2 glutathione = (12S)-hydroxy-(5Z,8Z,10E,14Z,17Z)-eicosapentaenoate + glutathione disulfide + H2O. The enzyme catalyses (15S)-hydroperoxy-(5Z,8Z,11Z,13E,17Z)-eicosapentaenoate + 2 glutathione = (15S)-hydroxy-(5Z,8Z,11Z,13E,17Z)-eicosapentaenoate + glutathione disulfide + H2O. It catalyses the reaction (15S)-hydroperoxy-(11Z,13E)-eicosadienoate + 2 glutathione = (15S)-hydroxy-(11Z,13E)-eicosadienoate + glutathione disulfide + H2O. The catalysed reaction is (17S)-hydroperoxy-(4Z,7Z,10Z,13Z,15E,19Z)-docosahexaenoate + 2 glutathione = (17S)-hydroxy-(4Z,7Z,10Z,13Z,15E,19Z)-docosahexaenoate + glutathione disulfide + H2O. Its function is as follows. Catalyzes the reduction of hydroperoxides in a glutathione-dependent manner thus regulating cellular redox homeostasis. Can reduce small soluble hydroperoxides such as H2O2, cumene hydroperoxide and tert-butyl hydroperoxide, as well as several fatty acid-derived hydroperoxides. In platelets catalyzes the reduction of 12-hydroperoxyeicosatetraenoic acid, the primary product of the arachidonate 12-lipoxygenase pathway. The protein is Glutathione peroxidase 1 (GPX1) of Sus scrofa (Pig).